A 305-amino-acid polypeptide reads, in one-letter code: Oxygen-dependent coproporphyrinogen-III oxidase (305 aa).

A substrate-binding site is contributed by Ser98. A divalent metal cation is bound by residues His102 and His112. The active-site Proton donor is the His112. Substrate is bound at residue 114-116 (NVR). Residues His151 and His181 each contribute to the a divalent metal cation site. Residues 246–281 (YVEFNLVYDRGTLFGLQSGGRTESILMSMPPLARWE) are important for dimerization. Position 264–266 (264–266 (GGR)) interacts with substrate.

It belongs to the aerobic coproporphyrinogen-III oxidase family. In terms of assembly, homodimer. A divalent metal cation serves as cofactor.

The protein localises to the cytoplasm. It carries out the reaction coproporphyrinogen III + O2 + 2 H(+) = protoporphyrinogen IX + 2 CO2 + 2 H2O. The protein operates within porphyrin-containing compound metabolism; protoporphyrin-IX biosynthesis; protoporphyrinogen-IX from coproporphyrinogen-III (O2 route): step 1/1. In terms of biological role, involved in the heme biosynthesis. Catalyzes the aerobic oxidative decarboxylation of propionate groups of rings A and B of coproporphyrinogen-III to yield the vinyl groups in protoporphyrinogen-IX. The sequence is that of Oxygen-dependent coproporphyrinogen-III oxidase from Vibrio vulnificus (strain CMCP6).